We begin with the raw amino-acid sequence, 394 residues long: Lipid-A-disaccharide synthase (394 aa).

This sequence belongs to the LpxB family.

It catalyses the reaction 2-N,3-O-bis[(3R)-3-hydroxytetradecanoyl]-alpha-D-glucosaminyl 1-phosphate + UDP-2-N,3-O-bis[(3R)-3-hydroxytetradecanoyl]-alpha-D-glucosamine = lipid A disaccharide (E. coli) + UDP + H(+). It carries out the reaction a lipid X + a UDP-2-N,3-O-bis[(3R)-3-hydroxyacyl]-alpha-D-glucosamine = a lipid A disaccharide + UDP + H(+). It functions in the pathway glycolipid biosynthesis; lipid IV(A) biosynthesis; lipid IV(A) from (3R)-3-hydroxytetradecanoyl-[acyl-carrier-protein] and UDP-N-acetyl-alpha-D-glucosamine: step 5/6. In terms of biological role, condensation of UDP-2,3-diacylglucosamine and 2,3-diacylglucosamine-1-phosphate to form lipid A disaccharide, a precursor of lipid A, a phosphorylated glycolipid that anchors the lipopolysaccharide to the outer membrane of the cell. The protein is Lipid-A-disaccharide synthase of Yersinia pestis.